Here is a 213-residue protein sequence, read N- to C-terminus: MDQEPVGGVERGEAVAASGAAAAAAFGESAGQMSNERGFENVELGVIGKKKKVPRRVIHFVSGETMEEYSTDEDEVDGLEKKDVLPTVDPTKLTWGPYLWFYMLRAATSTLSVCDFLGEKIASVLGISTPKYQYAIDEYYRMKKEEEEEEEENRMSEEAEKQYQQNKLQTDSIVQTDQPETVISSSFVNVNFEMEGDSEVIMESKQNPVSVPP.

Methionine 1 is subject to N-acetylmethionine. Serine 70 is modified (phosphoserine). At threonine 71 the chain carries Phosphothreonine. Residues 136-173 adopt a coiled-coil conformation; the sequence is IDEYYRMKKEEEEEEEENRMSEEAEKQYQQNKLQTDSI. Residues 147 to 175 form a disordered region; the sequence is EEEEEENRMSEEAEKQYQQNKLQTDSIVQ. Over residues 162–175 the composition is skewed to polar residues; sequence QYQQNKLQTDSIVQ.

This sequence belongs to the FAM177 family.

This is Protein FAM177A1 (FAM177A1) from Homo sapiens (Human).